Reading from the N-terminus, the 389-residue chain is 5-hydroxytryptamine receptor 1B (389 aa).

The tract at residues 1-27 is disordered; the sequence is MEAAGAPCAPPPPAGSQTGAPPANLSS. Topologically, residues 1–45 are extracellular; it reads MEAAGAPCAPPPPAGSQTGAPPANLSSAPHNCSAEGYIYQDSVAL. Residues 16–27 show a composition bias toward polar residues; sequence SQTGAPPANLSS. N-linked (GlcNAc...) asparagine glycans are attached at residues Asn24 and Asn31. Residues 46-71 traverse the membrane as a helical segment; that stretch reads PWKVLLVILLALITLATTLSNAFVIA. Over 72-85 the chain is Cytoplasmic; it reads TVYRTRKLHTPANY. Residues 86–110 traverse the membrane as a helical segment; sequence LIASLAVTDLLVSILVMPISTMYTV. Residues 111–118 are Extracellular-facing; sequence TGRWTLGQ. The chain crosses the membrane as a helical span at residues 119 to 144; that stretch reads VVCDLWLSSDITCCTASILHLCVIAL. A disulfide bridge connects residues Cys121 and Cys198. Residues Asp128 and Thr133 each coordinate ergotamine. The short motif at 145 to 147 is the DRY motif; important for ligand-induced conformation changes and signaling element; it reads DRY. Residues 145–164 lie on the Cytoplasmic side of the membrane; that stretch reads DRYWAITDAVEYSAKRTPKR. Residues 165 to 183 form a helical membrane-spanning segment; it reads AAVMIALVWVFSISISLPP. The Extracellular portion of the chain corresponds to 184 to 204; it reads FFWRQAKAEEEVSDCVVNTDH. Ergotamine is bound at residue Val200. A helical transmembrane segment spans residues 205–228; sequence ILYTVYSTVGAFYFPTLLLIALYG. Topologically, residues 229-314 are cytoplasmic; the sequence is RIYVEARSRI…AARERKATKT (86 aa). The segment covering 258 to 271 has biased composition (polar residues); sequence DSPGSTSSVTSVNS. Residues 258-281 are disordered; the sequence is DSPGSTSSVTSVNSRAPDVPSESG. The chain crosses the membrane as a helical span at residues 315 to 336; that stretch reads LGIILGAFIVCWLPFFIISLVM. Residues 337 to 346 are Extracellular-facing; that stretch reads PICKDACWFH. The helical transmembrane segment at 347–369 threads the bilayer; it reads LAIFDFFTWLGYLNSLINPIIYT. The NPxxY motif; important for ligand-induced conformation changes and signaling signature appears at 364 to 368; the sequence is NPIIY. The Cytoplasmic portion of the chain corresponds to 370–389; sequence MSNEDFKQAFHKLIRFKCAG. Cys387 is lipidated: S-palmitoyl cysteine.

It belongs to the G-protein coupled receptor 1 family. In terms of assembly, homodimer. Heterodimer with HTR1D. In terms of processing, phosphorylated. Desensitization of the receptor may be mediated by its phosphorylation. Post-translationally, palmitoylated.

The protein localises to the cell membrane. In terms of biological role, G-protein coupled receptor for 5-hydroxytryptamine (serotonin). Also functions as a receptor for ergot alkaloid derivatives, various anxiolytic and antidepressant drugs and other psychoactive substances, such as lysergic acid diethylamide (LSD). Ligand binding causes a conformation change that triggers signaling via guanine nucleotide-binding proteins (G proteins) and modulates the activity of downstream effectors, such as adenylate cyclase. HTR1B is coupled to G(i)/G(o) G alpha proteins and mediates inhibitory neurotransmission by inhibiting adenylate cyclase activity. Arrestin family members inhibit signaling via G proteins and mediate activation of alternative signaling pathways. Regulates the release of 5-hydroxytryptamine, dopamine and acetylcholine in the brain, and thereby affects neural activity, nociceptive processing, pain perception, mood and behavior. Besides, plays a role in vasoconstriction of cerebral arteries. The polypeptide is 5-hydroxytryptamine receptor 1B (HTR1B) (Canis lupus familiaris (Dog)).